Consider the following 145-residue polypeptide: uncharacterized protein (145 aa).

The interval 37-123 (GKGTNTAKSS…MDREASYFAP (87 aa)) is disordered. Positions 38–63 (KGTNTAKSSGGNNGTNLNAKRSNTTQ) are enriched in polar residues.

This is an uncharacterized protein from Caenorhabditis elegans.